Consider the following 261-residue polypeptide: Shikimate dehydrogenase (NADP(+)) (261 aa).

Shikimate is bound by residues 13–15 and Thr-60; that span reads SLS. Lys-64 (proton acceptor) is an active-site residue. The shikimate site is built by Asn-85 and Asp-100. NADP(+)-binding positions include 121–125 and Ile-202; that span reads GAGGA. Tyr-204 contacts shikimate. An NADP(+)-binding site is contributed by Gly-225.

The protein belongs to the shikimate dehydrogenase family. Homodimer.

It carries out the reaction shikimate + NADP(+) = 3-dehydroshikimate + NADPH + H(+). It participates in metabolic intermediate biosynthesis; chorismate biosynthesis; chorismate from D-erythrose 4-phosphate and phosphoenolpyruvate: step 4/7. Its function is as follows. Involved in the biosynthesis of the chorismate, which leads to the biosynthesis of aromatic amino acids. Catalyzes the reversible NADPH linked reduction of 3-dehydroshikimate (DHSA) to yield shikimate (SA). The chain is Shikimate dehydrogenase (NADP(+)) from Exiguobacterium sibiricum (strain DSM 17290 / CCUG 55495 / CIP 109462 / JCM 13490 / 255-15).